The chain runs to 143 residues: Fido domain-containing protein DDB_G0283145 (143 aa).

One can recognise a Fido domain in the interval 1-128 (MKGIIVSDGV…TSHLALIILN (128 aa)). The helical transmembrane segment at 49 to 69 (SSPYAVAAWLLHAFVSIHPFI) threads the bilayer.

It localises to the membrane. The protein is Fido domain-containing protein DDB_G0283145 of Dictyostelium discoideum (Social amoeba).